The following is a 443-amino-acid chain: Trimethylamine monooxygenase (443 aa).

Asp-37, Gln-39, Leu-45, and Trp-46 together coordinate FAD. Residues Trp-70 and Asn-72 each contribute to the NADP(+) site. Asn-72 and Val-125 together coordinate FAD. Tyr-170, Ser-202, Ser-203, Ser-205, and Arg-226 together coordinate NADP(+). FAD is bound by residues Gln-315 and Thr-318. Residue Arg-409 coordinates NADP(+).

The protein belongs to the FMO family. Requires FAD as cofactor.

It carries out the reaction trimethylamine + NADPH + O2 = trimethylamine N-oxide + NADP(+) + H2O. Functionally, catalyzes the oxidation of trimethylamine (TMA) to produce trimethylamine N-oxide (TMAO). In vitro, has a broad substrate specificity, oxidizing many nitrogen- and sulfur-containing compounds, including dimethylamine (DMA), dimethylsulfide (DMS) and dimethylsulfoxide (DMSO). In Pelagibacter ubique (strain HTCC1002), this protein is Trimethylamine monooxygenase.